A 366-amino-acid chain; its full sequence is Histidinol-phosphate aminotransferase 2 (366 aa).

Residues 1-11 (MQVKDQLSSLQ) are compositionally biased toward polar residues. The disordered stretch occupies residues 1-21 (MQVKDQLSSLQPYKPGKSPEQ). The residue at position 222 (K222) is an N6-(pyridoxal phosphate)lysine.

Belongs to the class-II pyridoxal-phosphate-dependent aminotransferase family. Histidinol-phosphate aminotransferase subfamily. As to quaternary structure, homodimer. Pyridoxal 5'-phosphate is required as a cofactor.

The catalysed reaction is L-histidinol phosphate + 2-oxoglutarate = 3-(imidazol-4-yl)-2-oxopropyl phosphate + L-glutamate. It participates in amino-acid biosynthesis; L-histidine biosynthesis; L-histidine from 5-phospho-alpha-D-ribose 1-diphosphate: step 7/9. The sequence is that of Histidinol-phosphate aminotransferase 2 (hisC2) from Bacillus anthracis.